We begin with the raw amino-acid sequence, 43 residues long: Mu-conotoxin-like Cal 12.2c (43 aa).

Residue R1 is a propeptide. Cystine bridges form between C4–C16, C11–C24, C18–C29, and C23–C35. At W31 the chain carries 6'-bromotryptophan. Residue P36 is modified to 4-hydroxyproline. At W40 the chain carries 6'-bromotryptophan.

In terms of tissue distribution, expressed by the venom duct.

The protein localises to the secreted. Functionally, mu-conotoxins block voltage-gated sodium channels. This toxin reversibly blocks voltage-gated sodium channel in cephalopods, with no alteration in the voltage dependence of sodium conductance or on the kinetics of inactivation. This chain is Mu-conotoxin-like Cal 12.2c, found in Californiconus californicus (California cone).